The primary structure comprises 675 residues: MPQVAKKLLVTCALPYANGSIHLGHMLEHIQADIWVRYQRMRGNEVHFICADDAHGTPIMLKAQQLGIKPEEMIAEMSQEHQQDFAGFGISYDNYHSTHSDENRELSNLIYGRLKENGFIKNRTISQLYDPEKGMFLPDRFVKGTCPKCKSPDQYGDNCEVCGATYSPTELIDPKSVVSGATPVLRDSEHFFFDLPSFSEMLQAWTRSGALQEQVANKMQEWFESGLQQWDISRDAPYFGFEIPDAPGKYFYVWLDAPIGYMGSFKNLCDKRGDLDFDEFWRKDSTTELYHFIGKDIVYFHSLFWPAMLEGSNFRKPTNLFVHGYVTVNGAKMSKSRGTFIKAGTYLQHLDADCLRYYYAAKLSSRIDDIDLNLEDFVQRVNADIVNKVVNLASRNAGFISKRFGGQLADKLADPALYQTFVDAAQSIAEAYASRESGRAIREIMALADLANRYVDEQAPWVVAKQEGRDADLQAICSMGINLFRVLMTYLKPVMPSLTERTEAFLNCELSWDSIQQPLLGHQVNPFKALFNRIDLDKVNEMVSASKEDMVAAKVVTGPLAEDPIQDTITFDDFAKVDMRIALITSADFVDGSDKLLKLQLDLGGETRQIFSGIRSAYPDPKALEGRLTIMVANLAPRKMRFGISEGMVMAAGPGGKEIFLLSPDSGAQPGMQVK.

The 'HIGH' region signature appears at 15-25; that stretch reads PYANGSIHLGH. Residues Cys146, Cys149, Cys159, and Cys162 each coordinate Zn(2+). A 'KMSKS' region motif is present at residues 332–336; it reads KMSKS. Lys335 serves as a coordination point for ATP. Residues 573 to 675 enclose the tRNA-binding domain; sequence DFAKVDMRIA…SGAQPGMQVK (103 aa).

Belongs to the class-I aminoacyl-tRNA synthetase family. MetG type 1 subfamily. In terms of assembly, homodimer. Zn(2+) serves as cofactor.

Its subcellular location is the cytoplasm. It catalyses the reaction tRNA(Met) + L-methionine + ATP = L-methionyl-tRNA(Met) + AMP + diphosphate. In terms of biological role, is required not only for elongation of protein synthesis but also for the initiation of all mRNA translation through initiator tRNA(fMet) aminoacylation. This Serratia proteamaculans (strain 568) protein is Methionine--tRNA ligase.